The primary structure comprises 438 residues: UPF0229 protein Smed_1028 (438 aa).

A disordered region spans residues 55 to 107; the sequence is PARGVNEPAFQPDSNSGERRHVLPGNREFAAGDRIPKRGGGGGAGNAGAGTGQ. Residues 92 to 105 show a composition bias toward gly residues; the sequence is RGGGGGAGNAGAGT.

It belongs to the UPF0229 family.

The sequence is that of UPF0229 protein Smed_1028 from Sinorhizobium medicae (strain WSM419) (Ensifer medicae).